The primary structure comprises 305 residues: UPF0450 protein C17orf58 homolog (305 aa).

Residues 1–22 (MTARALWLLCLIVGWSPEAPVA) form the signal peptide. The disordered stretch occupies residues 18–160 (EAPVAERKAP…DREPETQSCA (143 aa)). Basic and acidic residues predominate over residues 21–39 (VAERKAPPPHRKPDSRETP). Cystine bridges form between Cys-159–Cys-233, Cys-163–Cys-237, and Cys-174–Cys-304. In terms of domain architecture, NTR spans 159–304 (CARACSADAD…QVRGATHTQC (146 aa)).

This sequence belongs to the UPF0450 family.

In Mus musculus (Mouse), this protein is UPF0450 protein C17orf58 homolog.